The primary structure comprises 228 residues: Urease accessory protein UreF 1 (228 aa).

It belongs to the UreF family. UreD, UreF and UreG form a complex that acts as a GTP-hydrolysis-dependent molecular chaperone, activating the urease apoprotein by helping to assemble the nickel containing metallocenter of UreC. The UreE protein probably delivers the nickel.

Its subcellular location is the cytoplasm. Required for maturation of urease via the functional incorporation of the urease nickel metallocenter. This is Urease accessory protein UreF 1 from Brucella anthropi (strain ATCC 49188 / DSM 6882 / CCUG 24695 / JCM 21032 / LMG 3331 / NBRC 15819 / NCTC 12168 / Alc 37) (Ochrobactrum anthropi).